A 264-amino-acid chain; its full sequence is 3-methyl-2-oxobutanoate hydroxymethyltransferase (264 aa).

Mg(2+) is bound by residues Asp45 and Asp84. Residues 45-46, Asp84, and Lys112 contribute to the 3-methyl-2-oxobutanoate site; that span reads DS. Glu114 lines the Mg(2+) pocket. Glu181 (proton acceptor) is an active-site residue.

Belongs to the PanB family. As to quaternary structure, homodecamer; pentamer of dimers. Mg(2+) serves as cofactor.

It localises to the cytoplasm. It carries out the reaction 3-methyl-2-oxobutanoate + (6R)-5,10-methylene-5,6,7,8-tetrahydrofolate + H2O = 2-dehydropantoate + (6S)-5,6,7,8-tetrahydrofolate. The protein operates within cofactor biosynthesis; (R)-pantothenate biosynthesis; (R)-pantoate from 3-methyl-2-oxobutanoate: step 1/2. Its function is as follows. Catalyzes the reversible reaction in which hydroxymethyl group from 5,10-methylenetetrahydrofolate is transferred onto alpha-ketoisovalerate to form ketopantoate. The polypeptide is 3-methyl-2-oxobutanoate hydroxymethyltransferase (Shigella dysenteriae serotype 1 (strain Sd197)).